Consider the following 330-residue polypeptide: Ketol-acid reductoisomerase (NADP(+)) (330 aa).

One can recognise a KARI N-terminal Rossmann domain in the interval 1-181 (MKVYYEQDAT…GGARSGVIET (181 aa)). NADP(+) contacts are provided by residues 24-27 (YGSQ), R47, and 82-85 (DQVQ). Residue H107 is part of the active site. G133 contacts NADP(+). The 146-residue stretch at 182 to 327 (TFKEETETDL…GKLRGMMPWL (146 aa)) folds into the KARI C-terminal knotted domain. Mg(2+)-binding residues include D190, E194, E226, and E230. S251 is a substrate binding site.

Belongs to the ketol-acid reductoisomerase family. Mg(2+) is required as a cofactor.

The enzyme catalyses (2R)-2,3-dihydroxy-3-methylbutanoate + NADP(+) = (2S)-2-acetolactate + NADPH + H(+). The catalysed reaction is (2R,3R)-2,3-dihydroxy-3-methylpentanoate + NADP(+) = (S)-2-ethyl-2-hydroxy-3-oxobutanoate + NADPH + H(+). Its pathway is amino-acid biosynthesis; L-isoleucine biosynthesis; L-isoleucine from 2-oxobutanoate: step 2/4. It participates in amino-acid biosynthesis; L-valine biosynthesis; L-valine from pyruvate: step 2/4. Its function is as follows. Involved in the biosynthesis of branched-chain amino acids (BCAA). Catalyzes an alkyl-migration followed by a ketol-acid reduction of (S)-2-acetolactate (S2AL) to yield (R)-2,3-dihydroxy-isovalerate. In the isomerase reaction, S2AL is rearranged via a Mg-dependent methyl migration to produce 3-hydroxy-3-methyl-2-ketobutyrate (HMKB). In the reductase reaction, this 2-ketoacid undergoes a metal-dependent reduction by NADPH to yield (R)-2,3-dihydroxy-isovalerate. This Nitratidesulfovibrio vulgaris (strain DSM 19637 / Miyazaki F) (Desulfovibrio vulgaris) protein is Ketol-acid reductoisomerase (NADP(+)).